The primary structure comprises 174 residues: Adipose-secreted signaling protein (174 aa).

The residue at position 2 (alanine 2) is an N-acetylalanine. Threonine 147 is subject to Phosphothreonine.

Belongs to the ADISSP family. Expression is adipose-specific and highly brown adipose tissue-enriched.

Its subcellular location is the secreted. Its function is as follows. Adipocyte-secreted protein (adipokine) that acts as a key regulator for white adipose tissue (WAT) thermogenesis and glucose homeostasis at least in part through activation of protein kinase A (PKA). The polypeptide is Adipose-secreted signaling protein (Mus musculus (Mouse)).